A 257-amino-acid chain; its full sequence is MDATVFTKCERCKQPVYEKDLRARFNVCPNCEFHYPLPAPERVRLLTDAGSFEERDGELAAGDPLGFEGYPDRLRSARKKTGLGDAILSGVGEIGGRRVALAVMDFRFIGGSMGSVVGERVARTVELARAEGLPLVTVSASGGARMFEGIYSLMQMAKTSVALSRFMEGSKPYISILTDPTFGGVTASFATAADIIIAEPGARVGFAGARVIEQTTKERLPEGFQTAEFQREHGMVDRIVHRLALKGDLERLLGFVG.

The region spanning 5 to 257 (VFTKCERCKQ…DLERLLGFVG (253 aa)) is the CoA carboxyltransferase N-terminal domain. Residues Cys-9, Cys-12, Cys-28, and Cys-31 each coordinate Zn(2+). A C4-type zinc finger spans residues 9–31 (CERCKQPVYEKDLRARFNVCPNC).

Belongs to the AccD/PCCB family. In terms of assembly, acetyl-CoA carboxylase is a heterohexamer composed of biotin carboxyl carrier protein (AccB), biotin carboxylase (AccC) and two subunits each of ACCase subunit alpha (AccA) and ACCase subunit beta (AccD). The cofactor is Zn(2+).

The protein localises to the cytoplasm. The catalysed reaction is N(6)-carboxybiotinyl-L-lysyl-[protein] + acetyl-CoA = N(6)-biotinyl-L-lysyl-[protein] + malonyl-CoA. Its pathway is lipid metabolism; malonyl-CoA biosynthesis; malonyl-CoA from acetyl-CoA: step 1/1. In terms of biological role, component of the acetyl coenzyme A carboxylase (ACC) complex. Biotin carboxylase (BC) catalyzes the carboxylation of biotin on its carrier protein (BCCP) and then the CO(2) group is transferred by the transcarboxylase to acetyl-CoA to form malonyl-CoA. This Rubrobacter xylanophilus (strain DSM 9941 / JCM 11954 / NBRC 16129 / PRD-1) protein is Acetyl-coenzyme A carboxylase carboxyl transferase subunit beta.